Here is a 436-residue protein sequence, read N- to C-terminus: Methylenetetrahydrofolate--tRNA-(uracil-5-)-methyltransferase TrmFO (436 aa).

Gly10 to Gly15 is an FAD binding site.

It belongs to the MnmG family. TrmFO subfamily. FAD is required as a cofactor.

It localises to the cytoplasm. The enzyme catalyses uridine(54) in tRNA + (6R)-5,10-methylene-5,6,7,8-tetrahydrofolate + NADH + H(+) = 5-methyluridine(54) in tRNA + (6S)-5,6,7,8-tetrahydrofolate + NAD(+). The catalysed reaction is uridine(54) in tRNA + (6R)-5,10-methylene-5,6,7,8-tetrahydrofolate + NADPH + H(+) = 5-methyluridine(54) in tRNA + (6S)-5,6,7,8-tetrahydrofolate + NADP(+). Catalyzes the folate-dependent formation of 5-methyl-uridine at position 54 (M-5-U54) in all tRNAs. This chain is Methylenetetrahydrofolate--tRNA-(uracil-5-)-methyltransferase TrmFO, found in Exiguobacterium sp. (strain ATCC BAA-1283 / AT1b).